Reading from the N-terminus, the 693-residue chain is Polyribonucleotide nucleotidyltransferase (693 aa).

Mg(2+)-binding residues include Asp-489 and Asp-495. Positions Pro-556–Ile-615 constitute a KH domain. The 69-residue stretch at Gly-625 to Arg-693 folds into the S1 motif domain.

It belongs to the polyribonucleotide nucleotidyltransferase family. In terms of assembly, component of the RNA degradosome, which is a multiprotein complex involved in RNA processing and mRNA degradation. Mg(2+) is required as a cofactor.

It localises to the cytoplasm. The catalysed reaction is RNA(n+1) + phosphate = RNA(n) + a ribonucleoside 5'-diphosphate. Its function is as follows. Involved in mRNA degradation. Catalyzes the phosphorolysis of single-stranded polyribonucleotides processively in the 3'- to 5'-direction. The sequence is that of Polyribonucleotide nucleotidyltransferase from Francisella tularensis subsp. holarctica (strain OSU18).